A 112-amino-acid polypeptide reads, in one-letter code: Head virion protein G6P (112 aa).

Transmembrane regions (helical) follow at residues 3 to 23, 36 to 56, and 80 to 100; these read VLLG…TLFG, IAIA…ILVG, and NALP…IFDV.

The protein belongs to the inovirus G6P protein family. Interacts with G3P; this interaction is required for proper integration of G3P and G6P into the virion.

It is found in the virion. It localises to the host membrane. Its function is as follows. Plays essential roles both in the entry of the viral genome into the bacterial host and in budding process. The formation of the G3P-G6P complex termed adsorption complex is essential for correct termination of filamentous phage assembly. This is Head virion protein G6P (VI) from Escherichia coli (Bacteriophage f1).